We begin with the raw amino-acid sequence, 262 residues long: Apolipoprotein A-I-2 (262 aa).

The signal sequence occupies residues 1-18 (MQFLALALTILLAAATQA). The segment at 32-63 (VKVAMMEYMAQVKETAQRSIDHLDDTEYKEYK) is 3 X approximate tandem repeats. 2 consecutive repeat copies span residues 64 to 85 (VQLSQSLDNLQQYAQTASESLA) and 87 to 107 (YSEAIGVQLTEATAAVRAEVM). The segment at 64 to 262 (VQLSQSLDNL…YETISQAMKA (199 aa)) is 10 X approximate tandem repeats. Residues 108-118 (KDVEELRSQLE) form a 3; half-length repeat. 5 repeat units span residues 119–140 (PKRAELKEVLDKHIDEYRKRLE), 141–162 (PLIKDIVEQRRTELEAFRVKIE), 163–184 (PVVEEMRAKVSANVEETKAKLM), 185–206 (PIVETVRAKLTERLEELRTLAS), and 207–228 (PYAEEYKEQMVKAVGEVREKVV). Residues 229 to 239 (PLTTDFKGQLG) form a 9; half-length repeat. Copy 10 of the repeat occupies 240 to 262 (PAAEQAKEKLMALYETISQAMKA).

This sequence belongs to the apolipoprotein A1/A4/E family.

The protein resides in the secreted. Functionally, participates in the reverse transport of cholesterol from tissues to the liver for excretion by promoting cholesterol efflux from tissues and by acting as a cofactor for the lecithin cholesterol acyltransferase (LCAT). The protein is Apolipoprotein A-I-2 of Oncorhynchus mykiss (Rainbow trout).